A 278-amino-acid chain; its full sequence is Ribosomal RNA small subunit methyltransferase A (278 aa).

S-adenosyl-L-methionine-binding residues include Asn-27, Leu-29, Gly-54, Glu-75, Asp-95, and Asn-118.

Belongs to the class I-like SAM-binding methyltransferase superfamily. rRNA adenine N(6)-methyltransferase family. RsmA subfamily.

It is found in the cytoplasm. The catalysed reaction is adenosine(1518)/adenosine(1519) in 16S rRNA + 4 S-adenosyl-L-methionine = N(6)-dimethyladenosine(1518)/N(6)-dimethyladenosine(1519) in 16S rRNA + 4 S-adenosyl-L-homocysteine + 4 H(+). Specifically dimethylates two adjacent adenosines (A1518 and A1519) in the loop of a conserved hairpin near the 3'-end of 16S rRNA in the 30S particle. May play a critical role in biogenesis of 30S subunits. This Chlamydia caviae (strain ATCC VR-813 / DSM 19441 / 03DC25 / GPIC) (Chlamydophila caviae) protein is Ribosomal RNA small subunit methyltransferase A.